Here is a 464-residue protein sequence, read N- to C-terminus: Secretion-regulating guanine nucleotide exchange factor (464 aa).

RCC1 repeat units follow at residues Ala15–Gly67, Gly68–Lys119, Gly120–Thr171, Gly172–Thr230, Gly231–Thr283, Gly284–Asp351, and Lys352–Cys402. The tract at residues Asp422 to Gln464 is disordered. Phosphoserine is present on Ser429.

Interacts with SEC5. The interaction occurs only in the presence of magnesium or manganese and is stimulated by dCTP or GTP.

The protein resides in the cytoplasm. Its subcellular location is the nucleus. Its function is as follows. Probable guanine nucleotide exchange factor (GEF), which may be involved in the secretion process. The polypeptide is Secretion-regulating guanine nucleotide exchange factor (Sergef) (Mus musculus (Mouse)).